The following is a 351-amino-acid chain: Glycerol-1-phosphate dehydrogenase [NAD(P)+] (351 aa).

NAD(+) is bound by residues 97-101 (GKVID) and 119-122 (TSPS). D124 lines the substrate pocket. S128 contacts NAD(+). D171 contacts substrate. Zn(2+) contacts are provided by D171 and H251. H255 contributes to the substrate binding site. Zn(2+) is bound at residue H267.

Belongs to the glycerol-1-phosphate dehydrogenase family. As to quaternary structure, homodimer. It depends on Zn(2+) as a cofactor.

Its subcellular location is the cytoplasm. The enzyme catalyses sn-glycerol 1-phosphate + NAD(+) = dihydroxyacetone phosphate + NADH + H(+). The catalysed reaction is sn-glycerol 1-phosphate + NADP(+) = dihydroxyacetone phosphate + NADPH + H(+). The protein operates within membrane lipid metabolism; glycerophospholipid metabolism. In terms of biological role, catalyzes the NAD(P)H-dependent reduction of dihydroxyacetonephosphate (DHAP or glycerone phosphate) to glycerol 1-phosphate (G1P). The G1P thus generated is used as the glycerophosphate backbone of phospholipids in the cellular membranes of Archaea. In Saccharolobus islandicus (strain Y.N.15.51 / Yellowstone #2) (Sulfolobus islandicus), this protein is Glycerol-1-phosphate dehydrogenase [NAD(P)+].